The following is a 210-amino-acid chain: Thymidylate kinase (210 aa).

11–18 (GLEGAGKS) is a binding site for ATP.

The protein belongs to the thymidylate kinase family.

It catalyses the reaction dTMP + ATP = dTDP + ADP. In terms of biological role, phosphorylation of dTMP to form dTDP in both de novo and salvage pathways of dTTP synthesis. This chain is Thymidylate kinase, found in Vibrio campbellii (strain ATCC BAA-1116).